Here is a 380-residue protein sequence, read N- to C-terminus: Apolipoprotein A-IV (380 aa).

Residues Met1–Ala20 form the signal peptide. 13 tandem repeats follow at residues Asp33–Leu54, Thr60–Val81, Pro82–Arg103, Pro115–Gly136, Pro137–Thr158, Pro159–Ala180, Pro181–Thr202, Pro203–Ala224, Pro225–Lys246, Lys247–Val268, Pro269–Gln286, Lys287–Gly308, and Pro309–Gly330. Positions Asp33–Gly330 are 13 X 22 AA approximate tandem repeats. Residues Lys361–Gly380 are disordered.

It belongs to the apolipoprotein A1/A4/E family. In terms of assembly, homodimer. As to expression, secreted in plasma.

Its subcellular location is the secreted. May have a role in chylomicrons and VLDL secretion and catabolism. Required for efficient activation of lipoprotein lipase by ApoC-II; potent activator of LCAT. Apoa-IV is a major component of HDL and chylomicrons. The chain is Apolipoprotein A-IV (APOA4) from Bos taurus (Bovine).